Consider the following 350-residue polypeptide: MFS transporter OpS2 (350 aa).

8 helical membrane passes run 3–23, 34–54, 65–85, 141–161, 174–194, 227–247, 253–273, and 312–332; these read FLAG…VADL, GYFF…GGIL, WGAV…LPET, FMTC…NLAI, AIIL…ASVV, MCEN…VFGW, IFWF…SLIF, and PLLG…ICWA.

This sequence belongs to the major facilitator superfamily.

Its subcellular location is the cell membrane. MFS transporter; part of the gene cluster that mediates the biosynthesis of the bibenzoquinone oosporein, a metabolite required for fungal virulence that acts by evading host immunity to facilitate fungal multiplication in insects. The function of this putative MFS transporter remains unclear since its deletion leads to increased oosporein production. The sequence is that of MFS transporter OpS2 from Beauveria bassiana (strain ARSEF 2860) (White muscardine disease fungus).